Here is a 368-residue protein sequence, read N- to C-terminus: Alanine racemase (368 aa).

Lys40 acts as the Proton acceptor; specific for D-alanine in catalysis. An N6-(pyridoxal phosphate)lysine modification is found at Lys40. Residue Arg134 participates in substrate binding. Catalysis depends on Tyr263, which acts as the Proton acceptor; specific for L-alanine. Met310 lines the substrate pocket.

Belongs to the alanine racemase family. Requires pyridoxal 5'-phosphate as cofactor.

It catalyses the reaction L-alanine = D-alanine. It functions in the pathway amino-acid biosynthesis; D-alanine biosynthesis; D-alanine from L-alanine: step 1/1. In terms of biological role, catalyzes the interconversion of L-alanine and D-alanine. May also act on other amino acids. The polypeptide is Alanine racemase (alr) (Listeria monocytogenes serotype 1/2a (strain 10403S)).